Reading from the N-terminus, the 760-residue chain is Catalase-peroxidase (760 aa).

Positions 1–24 (MAESKCPFKSQGSRSNVAGGGTRN) are disordered. Positions 96-242 (WHSAGTYRVF…LAAAHMGLIY (147 aa)) form a cross-link, tryptophyl-tyrosyl-methioninium (Trp-Tyr) (with M-268). The active-site Proton acceptor is His97. Residues 242–268 (YVNPEGPDGNPDPVAAAHDIRVTFGRM) constitute a cross-link (tryptophyl-tyrosyl-methioninium (Tyr-Met) (with W-96)). His283 is a heme b binding site.

The protein belongs to the peroxidase family. Peroxidase/catalase subfamily. Homodimer or homotetramer. It depends on heme b as a cofactor. Post-translationally, formation of the three residue Trp-Tyr-Met cross-link is important for the catalase, but not the peroxidase activity of the enzyme.

The protein localises to the cytoplasm. The catalysed reaction is H2O2 + AH2 = A + 2 H2O. It carries out the reaction 2 H2O2 = O2 + 2 H2O. In terms of biological role, bifunctional enzyme with both catalase and broad-spectrum peroxidase activity. The protein is Catalase-peroxidase of Aspergillus clavatus (strain ATCC 1007 / CBS 513.65 / DSM 816 / NCTC 3887 / NRRL 1 / QM 1276 / 107).